Consider the following 371-residue polypeptide: Conglutinin (371 aa).

Positions 1–20 (MLLLPLSVLLLLTQPWRSLG) are cleaved as a signal peptide. One can recognise a Collagen-like domain in the interval 46–216 (GLPGHDGQDG…TGAKGESGLA (171 aa)). The interval 47-215 (LPGHDGQDGR…ETGAKGESGL (169 aa)) is disordered. Over residues 51-65 (DGQDGRECPHGEKGD) the composition is skewed to basic and acidic residues. Lysine 63 bears the 5-hydroxylysine mark. The span at 71–83 (PAGRAGRPGWVGP) shows a compositional bias: low complexity. At proline 78 the chain carries 4-hydroxyproline. Lysine 87 is modified (5-hydroxylysine). Proline 96 bears the 4-hydroxyproline mark. Lysine 99 carries the 5-hydroxylysine modification. 4-hydroxyproline is present on residues proline 108, proline 111, proline 129, and proline 132. Lysine 135 and lysine 141 each carry 5-hydroxylysine. Positions 139 to 148 (GPKGGVGAPG) are enriched in gly residues. 2 positions are modified to 4-hydroxyproline: proline 147 and proline 153. 5-hydroxylysine occurs at positions 159 and 162. 4-hydroxyproline is present on residues proline 171 and proline 195. Residue lysine 198 is modified to 5-hydroxylysine. Positions 201–203 (RGD) match the Cell attachment site motif. Residues 273–371 (QLCREAKGQL…SKQLLVICEF (99 aa)) form the C-type lectin domain. 2 disulfide bridges follow: cysteine 275-cysteine 369 and cysteine 347-cysteine 361. Residue asparagine 337 is glycosylated (N-linked (GlcNAc...) asparagine).

The protein belongs to the SFTPD family. As to quaternary structure, oligomeric complex of 4 set of homotrimers. Post-translationally, the hydroxylysines may be O-glycosylated.

Calcium-dependent lectin-like protein which binds to a yeast cell wall extract and immune complexes through the complement component (C3bi). It is capable of binding non-reducing terminal N-acetylglucosamine, mannose, and fucose residues. This is Conglutinin (CGN1) from Bos taurus (Bovine).